A 371-amino-acid polypeptide reads, in one-letter code: UDP-N-acetylglucosamine--N-acetylmuramyl-(pentapeptide) pyrophosphoryl-undecaprenol N-acetylglucosamine transferase (371 aa).

Residues 15 to 17 (TGG), Asn-126, Arg-169, Ser-197, and Gln-298 each bind UDP-N-acetyl-alpha-D-glucosamine.

The protein belongs to the glycosyltransferase 28 family. MurG subfamily.

The protein localises to the cell inner membrane. It catalyses the reaction di-trans,octa-cis-undecaprenyl diphospho-N-acetyl-alpha-D-muramoyl-L-alanyl-D-glutamyl-meso-2,6-diaminopimeloyl-D-alanyl-D-alanine + UDP-N-acetyl-alpha-D-glucosamine = di-trans,octa-cis-undecaprenyl diphospho-[N-acetyl-alpha-D-glucosaminyl-(1-&gt;4)]-N-acetyl-alpha-D-muramoyl-L-alanyl-D-glutamyl-meso-2,6-diaminopimeloyl-D-alanyl-D-alanine + UDP + H(+). The protein operates within cell wall biogenesis; peptidoglycan biosynthesis. In terms of biological role, cell wall formation. Catalyzes the transfer of a GlcNAc subunit on undecaprenyl-pyrophosphoryl-MurNAc-pentapeptide (lipid intermediate I) to form undecaprenyl-pyrophosphoryl-MurNAc-(pentapeptide)GlcNAc (lipid intermediate II). This Paramagnetospirillum magneticum (strain ATCC 700264 / AMB-1) (Magnetospirillum magneticum) protein is UDP-N-acetylglucosamine--N-acetylmuramyl-(pentapeptide) pyrophosphoryl-undecaprenol N-acetylglucosamine transferase.